The following is a 145-amino-acid chain: MDHYLKKLQDIYKKLEGHPFLFSPSKTNEKEFITLLNQALASTQLYRSIQQLFLTMYKLDPIGFVNYIKASKQEYLCLLINPKLVTKFLKITSFKIYINFRLKTFYISPNKYNNFYIAPSEEKANHLLKEEKTWAKIVEEGGEES.

Belongs to the asfivirus K145R family.

The protein resides in the virion. This is an uncharacterized protein from African swine fever virus (isolate Pig/Kenya/KEN-50/1950) (ASFV).